A 404-amino-acid chain; its full sequence is Keratin, type I cuticular Ha3-I (404 aa).

The head stretch occupies residues 1 to 56; the sequence is MSYSCGLPNLSCRTSCSSRPCVPPSCHGCTLPGACNIPANVSNCNWFCEGSFNGSE. An IF rod domain is found at 56–367; that stretch reads EKETMQFLND…SLLESEDCKL (312 aa). The tract at residues 57–91 is coil 1A; it reads KETMQFLNDRLASYLEKVRQLERDNAELENLIRER. A linker 1 region spans residues 92-102; the sequence is SQQQEPLVCAS. A coil 1B region spans residues 103–203; sequence YQSYFKTIEE…HEQEVNTLRC (101 aa). The interval 204 to 219 is linker 12; it reads QLGGRLNVEVDAAPAV. The segment at 220–363 is coil 2; it reads DLNQVLNETR…NTYRSLLESE (144 aa). A tail region spans residues 364 to 404; that stretch reads DCKLPSNPCAITNACDKSTGPCISNPCGPRARCGPCNTFGY.

It belongs to the intermediate filament family.

The chain is Keratin, type I cuticular Ha3-I from Pan troglodytes (Chimpanzee).